Reading from the N-terminus, the 387-residue chain is Mannitol-1-phosphate 5-dehydrogenase (387 aa).

3–14 is an NAD(+) binding site; sequence AVHFGAGNIGRG.

The protein belongs to the mannitol dehydrogenase family.

The catalysed reaction is D-mannitol 1-phosphate + NAD(+) = beta-D-fructose 6-phosphate + NADH + H(+). This chain is Mannitol-1-phosphate 5-dehydrogenase, found in Pseudarthrobacter chlorophenolicus (strain ATCC 700700 / DSM 12829 / CIP 107037 / JCM 12360 / KCTC 9906 / NCIMB 13794 / A6) (Arthrobacter chlorophenolicus).